The sequence spans 95 residues: Small ribosomal subunit protein bS18 (95 aa).

It belongs to the bacterial ribosomal protein bS18 family. In terms of assembly, part of the 30S ribosomal subunit. Forms a tight heterodimer with protein bS6.

In terms of biological role, binds as a heterodimer with protein bS6 to the central domain of the 16S rRNA, where it helps stabilize the platform of the 30S subunit. This chain is Small ribosomal subunit protein bS18, found in Rickettsia rickettsii (strain Sheila Smith).